Consider the following 973-residue polypeptide: Mediator of RNA polymerase II transcription subunit 16 (973 aa).

This sequence belongs to the Mediator complex subunit 16 family. In terms of assembly, component of the Mediator complex.

The protein resides in the nucleus. Functionally, component of the Mediator complex, a coactivator involved in the regulated transcription of nearly all RNA polymerase II-dependent genes. Mediator functions as a bridge to convey information from gene-specific regulatory proteins to the basal RNA polymerase II transcription machinery. Mediator is recruited to promoters by direct interactions with regulatory proteins and serves as a scaffold for the assembly of a functional preinitiation complex with RNA polymerase II and the general transcription factors. This chain is Mediator of RNA polymerase II transcription subunit 16 (SIN4), found in Candida glabrata (strain ATCC 2001 / BCRC 20586 / JCM 3761 / NBRC 0622 / NRRL Y-65 / CBS 138) (Yeast).